The sequence spans 316 residues: Aquaglyceroporin-2 (316 aa).

Residues 1–31 form a disordered region; it reads MADERGPINKSGPSSTYGATENNGESGGTRG. Residues 1-59 are Cytoplasmic-facing; it reads MADERGPINKSGPSSTYGATENNGESGGTRGAPATEDVIVIQDSGWYYIKFRFKEPFAE. Over residues 11-24 the composition is skewed to polar residues; sequence SGPSSTYGATENNG. The helical transmembrane segment at 60 to 80 threads the bilayer; the sequence is FLGTFILVAFGVGAIAQTVLS. Topologically, residues 81-86 are extracellular; it reads KGATGN. Residues 87–107 traverse the membrane as a helical segment; that stretch reads WITIALGFGLGLALGIAVSGH. Over 108–131 the chain is Cytoplasmic; sequence YSGGHLNPAVTITLAIYRKFPWVK. An NPA 1 motif is present at residues 114-116; the sequence is NPA. Residues 132 to 152 traverse the membrane as a helical segment; that stretch reads VPVYITAQVLGAFVAAAVIYL. Over 153-187 the chain is Extracellular; that stretch reads NYLPAIYNFAGDKRDVIGANATAGIFATYPQPFMS. N-linked (GlcNAc...) asparagine glycosylation is present at N172. Residues 188–208 form a helical membrane-spanning segment; the sequence is IGGAFFSEALGTFFLLFVILA. Residues 209–219 lie on the Cytoplasmic side of the membrane; that stretch reads MTDERNVPTTR. Residues 220 to 240 traverse the membrane as a helical segment; that stretch reads IVAPITIGLTLTAIAISLGFE. The Extracellular segment spans residues 241 to 271; that stretch reads TGFSLNAARDFGPRLFTFFIGYGVEVFTAYK. The short motif at 246–248 is the NPA 2 element; sequence NAA. The helical transmembrane segment at 272 to 292 threads the bilayer; sequence FYFWIPLVAPIVGGLVAGFVY. At 293–316 the chain is on the cytoplasmic side; that stretch reads DSLLYWGEKSFLNKNVHHEHRAVA.

This sequence belongs to the MIP/aquaporin (TC 1.A.8) family.

The protein resides in the cell membrane. It is found in the membrane. The catalysed reaction is H2O(in) = H2O(out). It catalyses the reaction glycerol(in) = glycerol(out). With respect to regulation, polyethylene glycol (PEG) stimulates whereas glycerol inhibits the aquaporin activity. Its function is as follows. Water channel required to facilitate the transport of water across membranes. Stimulates plant drought tolerance by facilitating the transport of water from the arbuscular mycorrhiza fungus to host plants. This chain is Aquaglyceroporin-2, found in Rhizophagus irregularis (Arbuscular mycorrhizal fungus).